A 385-amino-acid chain; its full sequence is Probable tRNA sulfurtransferase (385 aa).

Positions 65-165 constitute a THUMP domain; sequence AILQELFSFL…KEHFLVFTER (101 aa). ATP contacts are provided by residues 183–184, 208–209, arginine 267, glycine 285, and glutamine 294; these read LL and TF.

The protein belongs to the ThiI family.

The protein localises to the cytoplasm. The enzyme catalyses [ThiI sulfur-carrier protein]-S-sulfanyl-L-cysteine + a uridine in tRNA + 2 reduced [2Fe-2S]-[ferredoxin] + ATP + H(+) = [ThiI sulfur-carrier protein]-L-cysteine + a 4-thiouridine in tRNA + 2 oxidized [2Fe-2S]-[ferredoxin] + AMP + diphosphate. It catalyses the reaction [ThiS sulfur-carrier protein]-C-terminal Gly-Gly-AMP + S-sulfanyl-L-cysteinyl-[cysteine desulfurase] + AH2 = [ThiS sulfur-carrier protein]-C-terminal-Gly-aminoethanethioate + L-cysteinyl-[cysteine desulfurase] + A + AMP + 2 H(+). Its pathway is cofactor biosynthesis; thiamine diphosphate biosynthesis. In terms of biological role, catalyzes the ATP-dependent transfer of a sulfur to tRNA to produce 4-thiouridine in position 8 of tRNAs, which functions as a near-UV photosensor. Also catalyzes the transfer of sulfur to the sulfur carrier protein ThiS, forming ThiS-thiocarboxylate. This is a step in the synthesis of thiazole, in the thiamine biosynthesis pathway. The sulfur is donated as persulfide by IscS. The protein is Probable tRNA sulfurtransferase of Mycoplasma genitalium (strain ATCC 33530 / DSM 19775 / NCTC 10195 / G37) (Mycoplasmoides genitalium).